Reading from the N-terminus, the 121-residue chain is Large ribosomal subunit protein uL14 (121 aa).

The protein belongs to the universal ribosomal protein uL14 family. Part of the 50S ribosomal subunit. Forms a cluster with proteins L3 and L19. In the 70S ribosome, L14 and L19 interact and together make contacts with the 16S rRNA in bridges B5 and B8.

Its function is as follows. Binds to 23S rRNA. Forms part of two intersubunit bridges in the 70S ribosome. This chain is Large ribosomal subunit protein uL14, found in Synechococcus sp. (strain CC9605).